The following is a 352-amino-acid chain: Histidinol-phosphate aminotransferase (352 aa).

Residue K221 is modified to N6-(pyridoxal phosphate)lysine.

The protein belongs to the class-II pyridoxal-phosphate-dependent aminotransferase family. Histidinol-phosphate aminotransferase subfamily. In terms of assembly, homodimer. Requires pyridoxal 5'-phosphate as cofactor.

It catalyses the reaction L-histidinol phosphate + 2-oxoglutarate = 3-(imidazol-4-yl)-2-oxopropyl phosphate + L-glutamate. It participates in amino-acid biosynthesis; L-histidine biosynthesis; L-histidine from 5-phospho-alpha-D-ribose 1-diphosphate: step 7/9. In Staphylococcus aureus (strain MRSA252), this protein is Histidinol-phosphate aminotransferase.